The chain runs to 599 residues: Replication protein E1 (599 aa).

Residues 78 to 80 (KRK) carry the Nuclear localization signal motif. Residues Ser-84 and Ser-93 each carry the phosphoserine; by host modification. The Nuclear export signal motif lies at 92-101 (LSPQLQAVKI). Polar residues predominate over residues 124–140 (NSLTQVESESQAGPSSQ). A disordered region spans residues 124–144 (NSLTQVESESQAGPSSQDGGG). The tract at residues 139-303 (SQDGGGDINL…LVSHQAATTA (165 aa)) is DNA-binding region. Positions 402 to 552 (VNILSFLIVL…MPILDDGSPM (151 aa)) constitute an SF3 helicase domain. Residue 428–435 (GPPDTGKS) coordinates ATP. Lys-509 is covalently cross-linked (Glycyl lysine isopeptide (Lys-Gly) (interchain with G-Cter in SUMO)). Residues 575-599 (DPEEENNGVPSRTFRCTSRSNSDSY) are disordered. Polar residues predominate over residues 582-599 (GVPSRTFRCTSRSNSDSY).

Belongs to the papillomaviridae E1 protein family. Can form hexamers. Interacts with E2 protein; this interaction increases E1 DNA binding specificity. Interacts with host DNA polymerase subunit POLA2. Interacts with host single stranded DNA-binding protein RPA1. Interacts with host TOP1; this interaction stimulates the enzymatic activity of TOP1. Post-translationally, phosphorylated. Sumoylated.

Its subcellular location is the host nucleus. The catalysed reaction is Couples ATP hydrolysis with the unwinding of duplex DNA by translocating in the 3'-5' direction.. The enzyme catalyses ATP + H2O = ADP + phosphate + H(+). Its function is as follows. ATP-dependent DNA 3'-5' helicase required for initiation of viral DNA replication. It forms a complex with the viral E2 protein. The E1-E2 complex binds to the replication origin which contains binding sites for both proteins. During the initial step, a dimer of E1 interacts with a dimer of protein E2 leading to a complex that binds the viral origin of replication with high specificity. Then, a second dimer of E1 displaces the E2 dimer in an ATP-dependent manner to form the E1 tetramer. Following this, two E1 monomers are added to each half of the site, which results in the formation of two E1 trimers on the viral ori. Subsequently, two hexamers will be created. The double hexamer acts as a bi-directional helicase machinery and unwinds the viral DNA and then recruits the host DNA polymerase to start replication. This chain is Replication protein E1, found in Homo sapiens (Human).